The following is a 231-amino-acid chain: Large ribosomal subunit protein uL1 (231 aa).

Belongs to the universal ribosomal protein uL1 family. As to quaternary structure, part of the 50S ribosomal subunit.

Binds directly to 23S rRNA. The L1 stalk is quite mobile in the ribosome, and is involved in E site tRNA release. Functionally, protein L1 is also a translational repressor protein, it controls the translation of the L11 operon by binding to its mRNA. The protein is Large ribosomal subunit protein uL1 of Mesomycoplasma hyopneumoniae (strain 232) (Mycoplasma hyopneumoniae).